A 160-amino-acid polypeptide reads, in one-letter code: Transcription elongation factor GreA (160 aa).

A coiled-coil region spans residues 2–84 (KNTVNDKILL…SKAKIIKADL (83 aa)).

This sequence belongs to the GreA/GreB family.

In terms of biological role, necessary for efficient RNA polymerase transcription elongation past template-encoded arresting sites. The arresting sites in DNA have the property of trapping a certain fraction of elongating RNA polymerases that pass through, resulting in locked ternary complexes. Cleavage of the nascent transcript by cleavage factors such as GreA or GreB allows the resumption of elongation from the new 3'terminus. GreA releases sequences of 2 to 3 nucleotides. In Mesomycoplasma hyopneumoniae (strain 232) (Mycoplasma hyopneumoniae), this protein is Transcription elongation factor GreA.